We begin with the raw amino-acid sequence, 446 residues long: Peptide chain release factor 1, mitochondrial (446 aa).

A mitochondrion-targeting transit peptide spans 1–62; it reads MSHHLCIWLF…LLNKSWSRGC (62 aa). The segment at 298-362 is GGQ domain; sequence PKDLRVDTFR…LRARLYQQII (65 aa). The short motif at 312-314 is the GGQ element; the sequence is GGQ. Gln314 is subject to N5-methylglutamine.

It belongs to the prokaryotic/mitochondrial release factor family. In terms of processing, methylation of glutamine in the GGQ triplet by HEMK1 is conserved from bacteria to mammals.

The protein resides in the mitochondrion. Mitochondrial peptide chain release factor that directs the termination of translation in response to the peptide chain non-canonical stop codons AGG and AGA. Non-canonical termination codons AGG and AGA are found at the end of MT-CO1/COX1 and MT-ND6/ND6 open reading frames, respectively. Recognizes non-canonical stop codons via a network of interactions between the codon, MTRF1 and the ribosomal RNA (rRNA): in contrast to other translation release factors, which identify the codon in the A-site via direct interactions of amino acid side chains with the bases, MTRF1 repositions the first 2 bases of the stop codon to use an intricate network of interactions that includes residues of the release factor, the rRNA of the small ribosomal subunit, as well as neighboring bases of the mRNA. The polypeptide is Peptide chain release factor 1, mitochondrial (Mus musculus (Mouse)).